Consider the following 371-residue polypeptide: MTFSPEPAYQHGQAPRTAILLVNLGTPDAPTPKAVGRYLKEFLSDPRVVEIPRAAWLPLLYGVILPLRSRASALKYESIWLREAHMTGSPLLVYSERQAHALQRLLHQNGHEVTVACAMRYGNPSIGSVMEALRRQGCEQVLVLPMYPQYSGTTTATAFDEVFRVLGQWRNQPELRLVKHFHDHPAYISALQQQVSAYWARHGMPDFGRGDKLILSFHGVPRRTLELGDPYHCECLKTGRLLGEALGLQPGQYQVTFQSRFGKAEWLQPYTAPTLAELGKVGAGRVDVFCPGFPADCIETLEEIAMEGQTEFKVAGGKDFHFIPCMNDAAPWIAAMAEIALQHLQGWALATPHPHELEARRTRAQARGAAA.

Positions 218 and 299 each coordinate Fe cation.

It belongs to the ferrochelatase family.

Its subcellular location is the cytoplasm. It carries out the reaction heme b + 2 H(+) = protoporphyrin IX + Fe(2+). The protein operates within porphyrin-containing compound metabolism; protoheme biosynthesis; protoheme from protoporphyrin-IX: step 1/1. In terms of biological role, catalyzes the ferrous insertion into protoporphyrin IX. The chain is Ferrochelatase from Cupriavidus taiwanensis (strain DSM 17343 / BCRC 17206 / CCUG 44338 / CIP 107171 / LMG 19424 / R1) (Ralstonia taiwanensis (strain LMG 19424)).